A 485-amino-acid polypeptide reads, in one-letter code: Probable cobyric acid synthase (485 aa).

One can recognise a GATase cobBQ-type domain in the interval 250–435 (EIEVAVIRLP…LHGLFDNRNI (186 aa)). Cys328 functions as the Nucleophile in the catalytic mechanism. The active site involves His427.

The protein belongs to the CobB/CobQ family. CobQ subfamily.

Its pathway is cofactor biosynthesis; adenosylcobalamin biosynthesis. Functionally, catalyzes amidations at positions B, D, E, and G on adenosylcobyrinic A,C-diamide. NH(2) groups are provided by glutamine, and one molecule of ATP is hydrogenolyzed for each amidation. The polypeptide is Probable cobyric acid synthase (Methanosarcina mazei (strain ATCC BAA-159 / DSM 3647 / Goe1 / Go1 / JCM 11833 / OCM 88) (Methanosarcina frisia)).